The primary structure comprises 178 residues: MQFLKKNKPLFGIVTLALACATAQAQPTQGGVSLHYGIGDHYQRVTLNYETPTLWSHQFGGNWGRLDLTPELGASYWWADGSRSPGHVWQASAIPMFRWWTGERFYIEAGIGATVFSSTSFADKRIGSAFQFGDHIGLGFLLTPSNRIGLRYSHFSNAGIKEPNPGLDIVQLTYTYQF.

A signal peptide spans 1–19; it reads MQFLKKNKPLFGIVTLALA. Catalysis depends on charge relay system residues H154, S156, and D168.

The protein belongs to the PagL family. Homodimer.

Its subcellular location is the cell outer membrane. It carries out the reaction a 3-(acyloxy)acyl derivative of bacterial toxin + H2O = a 3-hydroxyacyl derivative of bacterial toxin + a fatty acid + H(+). Its function is as follows. Has lipid A 3-O-deacylase activity. Hydrolyzes the ester bond at the 3 position of lipid A, a bioactive component of lipopolysaccharide (LPS), thereby releasing the primary fatty acyl moiety. The protein is Lipid A deacylase PagL of Bordetella bronchiseptica (strain ATCC BAA-588 / NCTC 13252 / RB50) (Alcaligenes bronchisepticus).